We begin with the raw amino-acid sequence, 921 residues long: Ubiquitin carboxyl-terminal hydrolase 11 (921 aa).

Residues 1-16 are compositionally biased toward low complexity; the sequence is MAAVAADPAAAAVPAS. The tract at residues 1 to 29 is disordered; the sequence is MAAVAADPAAAAVPASAEDRETQPEAMPD. In terms of domain architecture, DUSP spans 28-133; it reads PDLDQQWRQI…DQPPIERKVI (106 aa). At Lys194 the chain carries N6-acetyllysine. The USP domain occupies 257-889; that stretch reads CGLTNLGNTC…AAYVLFYQRQ (633 aa). Catalysis depends on Cys266, which acts as the Nucleophile. A disordered region spans residues 592-697; that stretch reads TKPTSDDDDG…DRTTSPEEAQ (106 aa). Residue Ser596 is modified to Phosphoserine. Positions 597–624 are enriched in acidic residues; it reads DDDDGDEKGDENEDEDVEDDSSSEEEKE. Composition is skewed to polar residues over residues 657–666 and 676–697; these read LDNSLHTSQW and FTLQ…EEAQ. At Ser692 the chain carries Phosphoserine. Residue His847 is the Proton acceptor of the active site. The interval 893–921 is disordered; sequence RRQSQTASSETPTSPASSSTPNSDIMDVN. The segment covering 895–915 has biased composition (low complexity); sequence QSQTASSETPTSPASSSTPNS. A Phosphoserine modification is found at Ser906.

The protein belongs to the peptidase C19 family. As to quaternary structure, monomer. Associated component of the Polycomb group (PcG) multiprotein PRC1-like complex. Interacts with RANBP9/RANBPM. Interacts with BRCA2. Interacts with CHUK/IKKA. Interacts with NFKBIA. Interacts with SPRY3, RAE1, MYCBP2/PAM, and KCTD6.

The protein resides in the nucleus. It is found in the cytoplasm. The protein localises to the chromosome. The enzyme catalyses Thiol-dependent hydrolysis of ester, thioester, amide, peptide and isopeptide bonds formed by the C-terminal Gly of ubiquitin (a 76-residue protein attached to proteins as an intracellular targeting signal).. Its function is as follows. Protease that can remove conjugated ubiquitin from target proteins and polyubiquitin chains. Inhibits the degradation of target proteins by the proteasome. Cleaves preferentially 'Lys-6' and 'Lys-63'-linked ubiquitin chains. Has lower activity with 'Lys-11' and 'Lys-33'-linked ubiquitin chains, and extremely low activity with 'Lys-27', 'Lys-29' and 'Lys-48'-linked ubiquitin chains (in vitro). Plays a role in the regulation of pathways leading to NF-kappa-B activation. Plays a role in the regulation of DNA repair after double-stranded DNA breaks. Acts as a chromatin regulator via its association with the Polycomb group (PcG) multiprotein PRC1-like complex; may act by deubiquitinating components of the PRC1-like comple. Promotes cell proliferation by deubiquitinating phosphorylated E2F1x. This Rattus norvegicus (Rat) protein is Ubiquitin carboxyl-terminal hydrolase 11.